The chain runs to 292 residues: Diaminopimelate epimerase (292 aa).

2 residues coordinate substrate: N14 and N78. The active-site Proton donor is the C87. Substrate is bound by residues 88–89, N164, N197, and 221–222; these read GN and ER. The Proton acceptor role is filled by C230. 231–232 lines the substrate pocket; the sequence is GT.

Belongs to the diaminopimelate epimerase family. Homodimer.

Its subcellular location is the cytoplasm. The catalysed reaction is (2S,6S)-2,6-diaminopimelate = meso-2,6-diaminopimelate. Its pathway is amino-acid biosynthesis; L-lysine biosynthesis via DAP pathway; DL-2,6-diaminopimelate from LL-2,6-diaminopimelate: step 1/1. In terms of biological role, catalyzes the stereoinversion of LL-2,6-diaminopimelate (L,L-DAP) to meso-diaminopimelate (meso-DAP), a precursor of L-lysine and an essential component of the bacterial peptidoglycan. In Leifsonia xyli subsp. xyli (strain CTCB07), this protein is Diaminopimelate epimerase.